The following is a 274-amino-acid chain: Large ribosomal subunit protein uL2cz (274 aa).

Disordered stretches follow at residues 1–25 and 224–274; these read MAIH…VKSN and NPVD…RRSK. Over residues 7–25 the composition is skewed to polar residues; that stretch reads KTSTPSTRNGTVDSQVKSN.

This sequence belongs to the universal ribosomal protein uL2 family. In terms of assembly, part of the 50S ribosomal subunit.

The protein localises to the plastid. It is found in the chloroplast. The sequence is that of Large ribosomal subunit protein uL2cz (rpl2-A) from Atropa belladonna (Belladonna).